The primary structure comprises 1169 residues: Protein qua-1 (1169 aa).

The signal sequence occupies residues 1–22 (MRRLSAILPILLLSNFWPTVES). 2 disordered regions span residues 261-338 (GATG…AGTN) and 368-933 (AGGV…RTSS). Low complexity predominate over residues 278–292 (ESNGNNNNSFEGGRS). The span at 312 to 337 (GAGGKGGAGADGAAGSGAGAGAGAGT) shows a compositional bias: gly residues. Composition is skewed to acidic residues over residues 426-437 (DEEDEEDNGDED) and 453-464 (DDGDGDEDDDGT). Residues 511–523 (SPDDNDLLEKDEN) are compositionally biased toward basic and acidic residues. Composition is skewed to gly residues over residues 526–536 (NGKGGAGNGNG), 545–572 (KGNG…GTGD), 605–634 (DGNG…GSGD), 656–700 (GSNG…GGTG), and 727–752 (NAEG…GAGG). Basic and acidic residues predominate over residues 753 to 774 (KGDKSDSESGNEADGKDGKKNE). Gly residues predominate over residues 775–791 (GAGGEAAAGSGGANKGG). A compositionally biased stretch (acidic residues) spans 793 to 803 (DGDDDDVDVTD). Over residues 840–855 (GTVQTGAKHNAESSAS) the composition is skewed to polar residues. The segment covering 889–906 (SGTSESVTNGSGATESGS) has biased composition (low complexity). Positions 907–923 (TGSGTTGTGTSGTGSSG) are enriched in gly residues. The span at 924–933 (TGASAARTSS) shows a compositional bias: low complexity.

As to expression, transiently expressed in head cells.

Its subcellular location is the cytoplasmic vesicle. The protein resides in the secreted. The protein localises to the extracellular space. It is found in the extracellular matrix. In terms of biological role, required for cuticle shedding and normal alae morphology and localization, and subsequently larval development. This chain is Protein qua-1, found in Caenorhabditis elegans.